The chain runs to 998 residues: Beta-galactosidase (998 aa).

E431 functions as the Proton donor in the catalytic mechanism. The Nucleophile role is filled by E508.

The protein belongs to the glycosyl hydrolase 2 family.

The enzyme catalyses Hydrolysis of terminal non-reducing beta-D-galactose residues in beta-D-galactosides.. This chain is Beta-galactosidase (lacZ), found in Lactococcus lactis subsp. lactis (strain IL1403) (Streptococcus lactis).